A 420-amino-acid chain; its full sequence is uncharacterized protein (420 aa).

The protein belongs to the mimivirus R160 family.

It is found in the virion. This is an uncharacterized protein from Acanthamoeba polyphaga mimivirus (APMV).